Here is a 1400-residue protein sequence, read N- to C-terminus: DNA-directed RNA polymerase subunit beta' (1400 aa).

Zn(2+) contacts are provided by C71, C73, C86, and C89. Positions 462, 464, and 466 each coordinate Mg(2+). Zn(2+)-binding residues include C810, C884, C891, and C894.

It belongs to the RNA polymerase beta' chain family. The RNAP catalytic core consists of 2 alpha, 1 beta, 1 beta' and 1 omega subunit. When a sigma factor is associated with the core the holoenzyme is formed, which can initiate transcription. The cofactor is Mg(2+). Zn(2+) serves as cofactor.

The enzyme catalyses RNA(n) + a ribonucleoside 5'-triphosphate = RNA(n+1) + diphosphate. Its function is as follows. DNA-dependent RNA polymerase catalyzes the transcription of DNA into RNA using the four ribonucleoside triphosphates as substrates. This Rhodopseudomonas palustris (strain TIE-1) protein is DNA-directed RNA polymerase subunit beta'.